Reading from the N-terminus, the 501-residue chain is Endoglucanase 1 (501 aa).

An N-terminal signal peptide occupies residues Met1–Ser29. Catalysis depends on Asp96, which acts as the Nucleophile. Residues His422, Asp473, and Glu482 contribute to the active site.

Belongs to the glycosyl hydrolase 9 (cellulase E) family.

The protein resides in the secreted. It carries out the reaction Endohydrolysis of (1-&gt;4)-beta-D-glucosidic linkages in cellulose, lichenin and cereal beta-D-glucans.. In Arabidopsis thaliana (Mouse-ear cress), this protein is Endoglucanase 1 (CEL2).